The chain runs to 542 residues: CTP synthase (542 aa).

The segment at 1 to 265 (MARYIFITGG…DQEVLAAFGI (265 aa)) is amidoligase domain. CTP is bound at residue Ser13. Ser13 serves as a coordination point for UTP. 14–19 (SLGKGL) is a binding site for ATP. Residue Tyr54 participates in L-glutamine binding. Asp71 lines the ATP pocket. Asp71 and Glu139 together coordinate Mg(2+). Residues 146–148 (DIE), 186–191 (KTKPTQ), and Lys222 contribute to the CTP site. UTP contacts are provided by residues 186–191 (KTKPTQ) and Lys222. An ATP-binding site is contributed by 238-240 (RDV). The region spanning 291 to 541 (TIAIVGKYTG…IAAALEQSRL (251 aa)) is the Glutamine amidotransferase type-1 domain. Gly353 lines the L-glutamine pocket. Catalysis depends on Cys380, which acts as the Nucleophile; for glutamine hydrolysis. L-glutamine contacts are provided by residues 381 to 384 (FGMQ), Glu404, and Arg469. Catalysis depends on residues His514 and Glu516.

Belongs to the CTP synthase family. Homotetramer.

The catalysed reaction is UTP + L-glutamine + ATP + H2O = CTP + L-glutamate + ADP + phosphate + 2 H(+). It catalyses the reaction L-glutamine + H2O = L-glutamate + NH4(+). The enzyme catalyses UTP + NH4(+) + ATP = CTP + ADP + phosphate + 2 H(+). It participates in pyrimidine metabolism; CTP biosynthesis via de novo pathway; CTP from UDP: step 2/2. With respect to regulation, allosterically activated by GTP, when glutamine is the substrate; GTP has no effect on the reaction when ammonia is the substrate. The allosteric effector GTP functions by stabilizing the protein conformation that binds the tetrahedral intermediate(s) formed during glutamine hydrolysis. Inhibited by the product CTP, via allosteric rather than competitive inhibition. In terms of biological role, catalyzes the ATP-dependent amination of UTP to CTP with either L-glutamine or ammonia as the source of nitrogen. Regulates intracellular CTP levels through interactions with the four ribonucleotide triphosphates. In Methylocella silvestris (strain DSM 15510 / CIP 108128 / LMG 27833 / NCIMB 13906 / BL2), this protein is CTP synthase.